The following is a 497-amino-acid chain: Bypass of stop codon protein 6 (497 aa).

At 1-72 the chain is on the lumenal side; sequence MDASSVPPKV…KVKTYPLNYQ (72 aa). Phosphoserine occurs at positions 37 and 41. A glycan (N-linked (GlcNAc...) asparagine) is linked at asparagine 49. A helical transmembrane segment spans residues 73-93; sequence TVPLVKLQVIACLIMFVVFGM. Residues 94–144 are Cytoplasmic-facing; sequence NDQTVGALLPTLIEYYHISRVDVSNVFIVQLCGYVMASLSKERLNKHFGMR. Residues 145–165 traverse the membrane as a helical segment; it reads GGMLLAAGLCIVFLIILATAP. Over 166–167 the chain is Lumenal; sequence SS. The helical transmembrane segment at 168–188 threads the bilayer; it reads FYVCMFCGLPLGLGIGILDST. At 189 to 205 the chain is on the cytoplasmic side; the sequence is GNVLMGSLLVHKNELMG. A helical membrane pass occupies residues 206-226; that stretch reads IMHGLYGAAAMVTPPLVSYFV. The Lumenal portion of the chain corresponds to 227 to 232; it reads EWGHWS. A helical membrane pass occupies residues 233–253; sequence LFFLIPLFFSIIGMIVIFPAF. Topologically, residues 254-300 are cytoplasmic; the sequence is KFETASKYDYLCSVENKESNNDVEEAGDNSLMESTKASPGFFELLRN. Residues 301–321 traverse the membrane as a helical segment; that stretch reads PAIFLYSLYLFLYLGAEITTG. Residues 322–340 lie on the Lumenal side of the membrane; that stretch reads SWFFSYLLETKSSNKVAMS. A helical transmembrane segment spans residues 341–361; that stretch reads YIAASFWTGLTVGRLCLGFVT. At 362–373 the chain is on the cytoplasmic side; sequence ERFFENEYKASK. A helical transmembrane segment spans residues 374–394; the sequence is AYAFLTLSSYTLFVLVGLINS. Residues 395 to 397 lie on the Lumenal side of the membrane; that stretch reads SSV. A helical membrane pass occupies residues 398 to 418; sequence FYFVVLFFVVFCCGTFIGPLF. At 419–439 the chain is on the cytoplasmic side; it reads PNASIVALQVLPKRLHVSGVG. Residues 440 to 460 form a helical membrane-spanning segment; sequence VAVAVGGCGGAAIPYLAGVIA. At 461–462 the chain is on the lumenal side; the sequence is HT. Residues 463-483 form a helical membrane-spanning segment; that stretch reads VGIQYIPLLCWIMVALFTLEW. Over 484 to 497 the chain is Cytoplasmic; that stretch reads TLYPKFIKGHEEYF.

It belongs to the major facilitator superfamily.

The protein resides in the golgi apparatus. It is found in the cis-Golgi network membrane. Functionally, probable transporter. The chain is Bypass of stop codon protein 6 (BSC6) from Saccharomyces cerevisiae (strain ATCC 204508 / S288c) (Baker's yeast).